Consider the following 179-residue polypeptide: Large ribosomal subunit protein uL5 (179 aa).

It belongs to the universal ribosomal protein uL5 family. In terms of assembly, part of the 50S ribosomal subunit; part of the 5S rRNA/L5/L18/L25 subcomplex. Contacts the 5S rRNA and the P site tRNA. Forms a bridge to the 30S subunit in the 70S ribosome.

This is one of the proteins that bind and probably mediate the attachment of the 5S RNA into the large ribosomal subunit, where it forms part of the central protuberance. In the 70S ribosome it contacts protein S13 of the 30S subunit (bridge B1b), connecting the 2 subunits; this bridge is implicated in subunit movement. Contacts the P site tRNA; the 5S rRNA and some of its associated proteins might help stabilize positioning of ribosome-bound tRNAs. The protein is Large ribosomal subunit protein uL5 of Shewanella frigidimarina (strain NCIMB 400).